Reading from the N-terminus, the 325-residue chain is Glycine--tRNA ligase alpha subunit (325 aa).

The protein belongs to the class-II aminoacyl-tRNA synthetase family. In terms of assembly, tetramer of two alpha and two beta subunits.

It localises to the cytoplasm. The catalysed reaction is tRNA(Gly) + glycine + ATP = glycyl-tRNA(Gly) + AMP + diphosphate. This Ralstonia nicotianae (strain ATCC BAA-1114 / GMI1000) (Ralstonia solanacearum) protein is Glycine--tRNA ligase alpha subunit.